A 320-amino-acid chain; its full sequence is Nucleotide-binding protein Psyc_0118 (320 aa).

32-39 is an ATP binding site; sequence GRSGSGKT. 82-85 lines the GTP pocket; it reads DIRT.

The protein belongs to the RapZ-like family.

Its function is as follows. Displays ATPase and GTPase activities. The chain is Nucleotide-binding protein Psyc_0118 from Psychrobacter arcticus (strain DSM 17307 / VKM B-2377 / 273-4).